Here is a 325-residue protein sequence, read N- to C-terminus: D-alanine--D-alanine ligase (325 aa).

Residues 121–316 (KYVFEGCGLP…FEELVVRILR (196 aa)) form the ATP-grasp domain. 147-202 (VAALGTPLSVKPAHEGSSIGIRKVNSAAELAEAYEAAARLDDLVLVEQWIEGPEFT) serves as a coordination point for ATP. 3 residues coordinate Mg(2+): aspartate 270, glutamate 283, and asparagine 285.

The protein belongs to the D-alanine--D-alanine ligase family. Mg(2+) serves as cofactor. Requires Mn(2+) as cofactor.

The protein localises to the cytoplasm. The enzyme catalyses 2 D-alanine + ATP = D-alanyl-D-alanine + ADP + phosphate + H(+). Its pathway is cell wall biogenesis; peptidoglycan biosynthesis. Cell wall formation. In Marinobacter nauticus (strain ATCC 700491 / DSM 11845 / VT8) (Marinobacter aquaeolei), this protein is D-alanine--D-alanine ligase.